A 238-amino-acid chain; its full sequence is Pyridoxine 5'-phosphate synthase (238 aa).

N7 and R18 together coordinate 3-amino-2-oxopropyl phosphate. H43 functions as the Proton acceptor in the catalytic mechanism. R45 and H50 together coordinate 1-deoxy-D-xylulose 5-phosphate. E70 acts as the Proton acceptor in catalysis. 1-deoxy-D-xylulose 5-phosphate is bound at residue T100. H190 acts as the Proton donor in catalysis. 3-amino-2-oxopropyl phosphate-binding positions include D191 and 213-214 (GH).

This sequence belongs to the PNP synthase family. In terms of assembly, homooctamer; tetramer of dimers.

The protein resides in the cytoplasm. The enzyme catalyses 3-amino-2-oxopropyl phosphate + 1-deoxy-D-xylulose 5-phosphate = pyridoxine 5'-phosphate + phosphate + 2 H2O + H(+). It participates in cofactor biosynthesis; pyridoxine 5'-phosphate biosynthesis; pyridoxine 5'-phosphate from D-erythrose 4-phosphate: step 5/5. Its function is as follows. Catalyzes the complicated ring closure reaction between the two acyclic compounds 1-deoxy-D-xylulose-5-phosphate (DXP) and 3-amino-2-oxopropyl phosphate (1-amino-acetone-3-phosphate or AAP) to form pyridoxine 5'-phosphate (PNP) and inorganic phosphate. The sequence is that of Pyridoxine 5'-phosphate synthase from Cytophaga hutchinsonii (strain ATCC 33406 / DSM 1761 / CIP 103989 / NBRC 15051 / NCIMB 9469 / D465).